Consider the following 190-residue polypeptide: Selenoprotein S (190 aa).

A helical transmembrane segment spans residues 28-48; the sequence is SLLASYGWYILFSCVLLYIVI. The interval 78 to 90 is VCP/p97-interacting motif (VIM); the sequence is RQEALAAARLRMQ. Residues 96–190 are disordered; it reads QVEKHKEKQR…RRGPSSGGUS (95 aa). Basic and acidic residues predominate over residues 97–118; the sequence is VEKHKEKQRQLEEEKRRQKIEM. The span at 160–174 shows a compositional bias: gly residues; the sequence is RGGGYNPLTGEGGGT. A non-standard amino acid (selenocysteine) is located at residue U189.

Belongs to the selenoprotein S family. Interacts with DERL1 and (via VIM motif) with VCP, suggesting that it forms a membrane complex with DERL1 that serves as a receptor for VCP. Also interacts with DERL2, DERL3 and SELENOK. The SELENOK-SELENOS complex interacts with VCP. Interacts with CCDC47. In terms of processing, truncated SELENOS proteins produced by failed UGA/Sec decoding are ubiquitinated by the CRL2(KLHDC2) and CRL2(KLHDC3) complexes, which recognizes the glycine (Gly) at the C-terminus of truncated SELENOS proteins. Truncated SELENOS proteins produced by failed UGA/Sec decoding are also ubiquitinated by the CRL5(KLHDC1) complex.

The protein resides in the endoplasmic reticulum membrane. Its subcellular location is the cytoplasm. Its function is as follows. Involved in the degradation process of misfolded endoplasmic reticulum (ER) luminal proteins. Participates in the transfer of misfolded proteins from the ER to the cytosol, where they are destroyed by the proteasome in a ubiquitin-dependent manner. Probably acts by serving as a linker between DERL1, which mediates the retrotranslocation of misfolded proteins into the cytosol, and the ATPase complex VCP, which mediates the translocation and ubiquitination. This chain is Selenoprotein S, found in Rattus norvegicus (Rat).